The sequence spans 209 residues: ATP-dependent Clp protease proteolytic subunit 2 (209 aa).

Ser-106 serves as the catalytic Nucleophile. The active site involves His-131.

Belongs to the peptidase S14 family. Fourteen ClpP subunits assemble into 2 heptameric rings which stack back to back to give a disk-like structure with a central cavity, resembling the structure of eukaryotic proteasomes.

It localises to the cytoplasm. It catalyses the reaction Hydrolysis of proteins to small peptides in the presence of ATP and magnesium. alpha-casein is the usual test substrate. In the absence of ATP, only oligopeptides shorter than five residues are hydrolyzed (such as succinyl-Leu-Tyr-|-NHMec, and Leu-Tyr-Leu-|-Tyr-Trp, in which cleavage of the -Tyr-|-Leu- and -Tyr-|-Trp bonds also occurs).. Functionally, cleaves peptides in various proteins in a process that requires ATP hydrolysis. Has a chymotrypsin-like activity. Plays a major role in the degradation of misfolded proteins. The polypeptide is ATP-dependent Clp protease proteolytic subunit 2 (Mesorhizobium japonicum (strain LMG 29417 / CECT 9101 / MAFF 303099) (Mesorhizobium loti (strain MAFF 303099))).